The chain runs to 460 residues: Bifunctional protein GlmU (460 aa).

The interval 1 to 232 is pyrophosphorylase; sequence MALNVVILAA…AIEVEGANNR (232 aa). Residues 8–11, Lys22, Gln73, 78–79, 100–102, Gly137, Glu157, Asn172, and Asn230 each bind UDP-N-acetyl-alpha-D-glucosamine; these read LAAG, GT, and YGD. Asp102 lines the Mg(2+) pocket. Asn230 serves as a coordination point for Mg(2+). A linker region spans residues 233–253; it reads VQLAQLERAYQAREAEKLMLA. The interval 254 to 460 is N-acetyltransferase; the sequence is GANLRDPSRI…GWQRPVKIKK (207 aa). UDP-N-acetyl-alpha-D-glucosamine is bound by residues Arg336 and Lys354. The Proton acceptor role is filled by His366. Tyr369 and Asn380 together coordinate UDP-N-acetyl-alpha-D-glucosamine. Acetyl-CoA is bound by residues Ala383, 389 to 390, Ser408, Ala426, and Arg443; that span reads NY.

The protein in the N-terminal section; belongs to the N-acetylglucosamine-1-phosphate uridyltransferase family. This sequence in the C-terminal section; belongs to the transferase hexapeptide repeat family. As to quaternary structure, homotrimer. Requires Mg(2+) as cofactor.

The protein localises to the cytoplasm. The enzyme catalyses alpha-D-glucosamine 1-phosphate + acetyl-CoA = N-acetyl-alpha-D-glucosamine 1-phosphate + CoA + H(+). It catalyses the reaction N-acetyl-alpha-D-glucosamine 1-phosphate + UTP + H(+) = UDP-N-acetyl-alpha-D-glucosamine + diphosphate. The protein operates within nucleotide-sugar biosynthesis; UDP-N-acetyl-alpha-D-glucosamine biosynthesis; N-acetyl-alpha-D-glucosamine 1-phosphate from alpha-D-glucosamine 6-phosphate (route II): step 2/2. Its pathway is nucleotide-sugar biosynthesis; UDP-N-acetyl-alpha-D-glucosamine biosynthesis; UDP-N-acetyl-alpha-D-glucosamine from N-acetyl-alpha-D-glucosamine 1-phosphate: step 1/1. It participates in bacterial outer membrane biogenesis; LPS lipid A biosynthesis. Its function is as follows. Catalyzes the last two sequential reactions in the de novo biosynthetic pathway for UDP-N-acetylglucosamine (UDP-GlcNAc). The C-terminal domain catalyzes the transfer of acetyl group from acetyl coenzyme A to glucosamine-1-phosphate (GlcN-1-P) to produce N-acetylglucosamine-1-phosphate (GlcNAc-1-P), which is converted into UDP-GlcNAc by the transfer of uridine 5-monophosphate (from uridine 5-triphosphate), a reaction catalyzed by the N-terminal domain. This Shewanella baltica (strain OS155 / ATCC BAA-1091) protein is Bifunctional protein GlmU.